The following is a 197-amino-acid chain: Recombination protein RecR (197 aa).

The C4-type zinc finger occupies 56–71 (CSVCGNFDTIDPCAIC). Positions 79–174 (SMLCVVEDVA…TVSGLAHGVP (96 aa)) constitute a Toprim domain.

It belongs to the RecR family.

May play a role in DNA repair. It seems to be involved in an RecBC-independent recombinational process of DNA repair. It may act with RecF and RecO. The polypeptide is Recombination protein RecR (Paramagnetospirillum magneticum (strain ATCC 700264 / AMB-1) (Magnetospirillum magneticum)).